The primary structure comprises 144 residues: UPF0179 protein PF1381 (144 aa).

This sequence belongs to the UPF0179 family.

The polypeptide is UPF0179 protein PF1381 (Pyrococcus furiosus (strain ATCC 43587 / DSM 3638 / JCM 8422 / Vc1)).